The sequence spans 330 residues: Aspartate--ammonia ligase (330 aa).

The protein belongs to the class-II aminoacyl-tRNA synthetase family. AsnA subfamily.

It localises to the cytoplasm. The enzyme catalyses L-aspartate + NH4(+) + ATP = L-asparagine + AMP + diphosphate + H(+). It functions in the pathway amino-acid biosynthesis; L-asparagine biosynthesis; L-asparagine from L-aspartate (ammonia route): step 1/1. This chain is Aspartate--ammonia ligase, found in Yersinia pseudotuberculosis serotype O:1b (strain IP 31758).